The following is a 102-amino-acid chain: A-type ATP synthase subunit F (102 aa).

This sequence belongs to the V-ATPase F subunit family. As to quaternary structure, has multiple subunits with at least A(3), B(3), C, D, E, F, H, I and proteolipid K(x).

The protein resides in the cell membrane. Component of the A-type ATP synthase that produces ATP from ADP in the presence of a proton gradient across the membrane. This Thermococcus onnurineus (strain NA1) protein is A-type ATP synthase subunit F.